Reading from the N-terminus, the 237-residue chain is Ribosomal RNA small subunit methyltransferase G (237 aa).

Residues Gly-78, Phe-83, 129–130, and Arg-148 contribute to the S-adenosyl-L-methionine site; that span reads AE. The disordered stretch occupies residues 216 to 237; sequence SKKKETPNKYPRKAGTPNKKPL.

This sequence belongs to the methyltransferase superfamily. RNA methyltransferase RsmG family.

The protein localises to the cytoplasm. Functionally, specifically methylates the N7 position of a guanine in 16S rRNA. The protein is Ribosomal RNA small subunit methyltransferase G of Streptococcus agalactiae serotype Ia (strain ATCC 27591 / A909 / CDC SS700).